The chain runs to 220 residues: Iron-sulfur cluster repair protein YtfE (220 aa).

It belongs to the RIC family. YtfE subfamily. Homodimer.

The protein localises to the cytoplasm. In terms of biological role, di-iron-containing protein involved in the repair of iron-sulfur clusters damaged by oxidative and nitrosative stress conditions. The chain is Iron-sulfur cluster repair protein YtfE from Salmonella schwarzengrund (strain CVM19633).